The chain runs to 891 residues: Alanine--tRNA ligase (891 aa).

Zn(2+) contacts are provided by histidine 564, histidine 568, cysteine 677, and histidine 681.

The protein belongs to the class-II aminoacyl-tRNA synthetase family. Requires Zn(2+) as cofactor.

Its subcellular location is the cytoplasm. It carries out the reaction tRNA(Ala) + L-alanine + ATP = L-alanyl-tRNA(Ala) + AMP + diphosphate. Its function is as follows. Catalyzes the attachment of alanine to tRNA(Ala) in a two-step reaction: alanine is first activated by ATP to form Ala-AMP and then transferred to the acceptor end of tRNA(Ala). Also edits incorrectly charged Ser-tRNA(Ala) and Gly-tRNA(Ala) via its editing domain. The polypeptide is Alanine--tRNA ligase (Rhodopseudomonas palustris (strain BisA53)).